Here is a 234-residue protein sequence, read N- to C-terminus: Phosphoribosylaminoimidazole-succinocarboxamide synthase (234 aa).

It belongs to the SAICAR synthetase family.

It carries out the reaction 5-amino-1-(5-phospho-D-ribosyl)imidazole-4-carboxylate + L-aspartate + ATP = (2S)-2-[5-amino-1-(5-phospho-beta-D-ribosyl)imidazole-4-carboxamido]succinate + ADP + phosphate + 2 H(+). The protein operates within purine metabolism; IMP biosynthesis via de novo pathway; 5-amino-1-(5-phospho-D-ribosyl)imidazole-4-carboxamide from 5-amino-1-(5-phospho-D-ribosyl)imidazole-4-carboxylate: step 1/2. The chain is Phosphoribosylaminoimidazole-succinocarboxamide synthase from Sulfurisphaera tokodaii (strain DSM 16993 / JCM 10545 / NBRC 100140 / 7) (Sulfolobus tokodaii).